The sequence spans 504 residues: Cytochrome P450 monooxygenase braC (504 aa).

Residues 4–24 traverse the membrane as a helical segment; that stretch reads LYLPTIWASTLTAATIFIVAV. Residue Cys448 coordinates heme.

This sequence belongs to the cytochrome P450 family. Requires heme as cofactor.

Its subcellular location is the membrane. The protein operates within secondary metabolite biosynthesis. Functionally, cytochrome P450 monooxygenase; part of the gene cluster that mediates the biosynthesis of the brasilane terpene glycosides brasilane D and E. The biosynthesis starts with the activity of the terpene cyclase braA that converts farnesyl pyrophosphate into the sesquiterpene alcohol trichobrasilenol. Subsequently, trichobrasilenol is glycosylated by the O-glycosyltransferase braB putatively using UDP-GlcNAc as sugar donor to yield brasilane A. The latter then undergoes two rounds of oxidation performed by the cytochrome P450 monooxygenase braC. In the first round braC hydroxylates C-12 forming brasilane D, which serves as substrate in the second round to establish the epoxide at the bond between C-5 and C-10 and oxidize the alcohol at C-12 to an aldehyde leading to the final product brasilane E. This chain is Cytochrome P450 monooxygenase braC, found in Annulohypoxylon truncatum (Hypoxylon truncatum).